The primary structure comprises 434 residues: Sodium/bile acid cotransporter 5 (434 aa).

An N-terminal signal peptide occupies residues 1 to 18 (MSGNFFIFLLLLVTPGEA). Residues 19-129 (KKSFLSFLNI…VRVFRQTDDS (111 aa)) are Extracellular-facing. N-linked (GlcNAc...) asparagine glycans are attached at residues Asn-73 and Asn-96. A helical transmembrane segment spans residues 130 to 150 (LLQAPIHVDSSIFLLVLSMIL). The Cytoplasmic segment spans residues 151-172 (LNKCAFGCKIEFQVLQTVWKRP). A helical transmembrane segment spans residues 173-193 (LPILLGVVIQFFLMPFCGFLL). Residues 194-203 (SQILGLPKAQ) are Extracellular-facing. The helical transmembrane segment at 204 to 226 (AFGFVMTCTCPGGGGGYLFALLL) threads the bilayer. At 227–232 (EGDVTL) the chain is on the cytoplasmic side. A helical transmembrane segment spans residues 233 to 255 (AILMTCTSTSLALIMMPVNSYFY). Over 256 to 268 (SRLLGLAGAFHVP) the chain is Extracellular. Residues 269 to 289 (VLKIVSTLLFILMPMSTGVII) form a helical membrane-spanning segment. The Cytoplasmic portion of the chain corresponds to 290–306 (KHKMPAKAICLERVVRP). Residues 307–327 (LSLTLMFVGIYLAFRMGLVFL) traverse the membrane as a helical segment. Over 328–331 (RMAN) the chain is Extracellular. A helical membrane pass occupies residues 332–352 (LEVFLLGLLVPALGLLFGYSL). Residues 353-365 (AKVYLLPLPVCKT) are Cytoplasmic-facing. A helical membrane pass occupies residues 366-386 (VALETGMLNSFLALAIIQLSF). Residues 387–395 (SQPKAHEAS) lie on the Extracellular side of the membrane. The chain crosses the membrane as a helical span at residues 396–416 (VAPFTVAMCSSCEMLLLLLVY). The Cytoplasmic segment spans residues 417–434 (KAKRRPSLSTEYEKTPLV).

The protein belongs to the bile acid:sodium symporter (BASS) (TC 2.A.28) family.

Its subcellular location is the membrane. The chain is Sodium/bile acid cotransporter 5 (Slc10a5) from Mus musculus (Mouse).